A 224-amino-acid polypeptide reads, in one-letter code: Metalloproteinase inhibitor 4 (224 aa).

Positions 1 to 29 (MPGSPRPAPSWVLLLRLLALLRPPGLGEA) are cleaved as a signal peptide. A Zn(2+)-binding site is contributed by C30. 2 involved in metalloproteinase-binding regions span residues 30–33 (CSCA) and 99–100 (SS). Intrachain disulfides connect C30–C102, C32–C131, C42–C156, C158–C205, C163–C168, and C176–C197. One can recognise an NTR domain in the interval 30 to 156 (CSCAPAHPQQ…SLNHHYHLNC (127 aa)).

The protein belongs to the protease inhibitor I35 (TIMP) family. As to expression, abundant in heart and present at low levels in many other tissues.

The protein resides in the secreted. Functionally, complexes with metalloproteinases (such as collagenases) and irreversibly inactivates them by binding to their catalytic zinc cofactor. Known to act on MMP-1, MMP-2, MMP-3, MMP-7 and MMP-9. The polypeptide is Metalloproteinase inhibitor 4 (TIMP4) (Homo sapiens (Human)).